A 316-amino-acid chain; its full sequence is MNVQIGIDLMGGDHSPLVIWEVLIDVLNSRASNSHISFTAFASHEVKEQILSHSTYKGYPEVIASESFITMEDSPLSAIRKKSSSMALGLDYLKEDKIDALISTGNTAALITLSRTKIPMFPTVRRPALLVRVPTMRGCAVILDVGANVSVNPEEMLGFARMGLAYKQCLGDTEHPTVGLLNIGSEERKGTEAHRLTFRLLRETFQHAFLGNIESGDVFSGSVDVVVSDGFTGNIFLKTAEGVFDFLSHILGDKLESDVKRQLDYTIYPGSMVCGLSKLVIKCHGKACGRSLFNGISGSIDLVRARVCERILSSLS.

The protein belongs to the PlsX family. Homodimer. Probably interacts with PlsY.

It is found in the cytoplasm. The catalysed reaction is a fatty acyl-[ACP] + phosphate = an acyl phosphate + holo-[ACP]. The protein operates within lipid metabolism; phospholipid metabolism. Catalyzes the reversible formation of acyl-phosphate (acyl-PO(4)) from acyl-[acyl-carrier-protein] (acyl-ACP). This enzyme utilizes acyl-ACP as fatty acyl donor, but not acyl-CoA. In Chlamydia abortus (strain DSM 27085 / S26/3) (Chlamydophila abortus), this protein is Phosphate acyltransferase.